The primary structure comprises 105 residues: Putative membrane protein insertion efficiency factor (105 aa).

It belongs to the UPF0161 family.

The protein resides in the cell membrane. Could be involved in insertion of integral membrane proteins into the membrane. The chain is Putative membrane protein insertion efficiency factor from Bifidobacterium longum subsp. infantis (strain ATCC 15697 / DSM 20088 / JCM 1222 / NCTC 11817 / S12).